The following is a 605-amino-acid chain: Alpha-1,3-galactosidase B (605 aa).

The N-terminal stretch at 1–19 (MKRIIFNFCFVWLAVSAFA) is a signal peptide. 3 PbH1 repeats span residues 428 to 450 (CPEVYFADNVIRNNRARGTLFST), 451 to 473 (PLKTVVERNLFDHTSGTAILLCG), and 484 to 538 (CRNV…VIED).

Belongs to the glycosyl hydrolase 110 family. B subfamily.

It carries out the reaction Hydrolysis of terminal, non-reducing branched (1-&gt;3)-alpha-D-galactosidic residues, producing free D-galactose.. It catalyses the reaction Hydrolysis of terminal, non-reducing linear (1-&gt;3)-alpha-D-galactosidic residues, producing free D-galactose.. The enzyme catalyses Hydrolysis of terminal, non-reducing alpha-D-galactose residues in alpha-D-galactosides, including galactose oligosaccharides, galactomannans and galactolipids.. Its function is as follows. Alpha-galactosidase. Removes both branched alpha-1,3-linked galactose residues of blood group B antigens and linear alpha-1,3-linked galactose structures. The polypeptide is Alpha-1,3-galactosidase B (glaB2) (Phocaeicola vulgatus (strain ATCC 8482 / DSM 1447 / JCM 5826 / CCUG 4940 / NBRC 14291 / NCTC 11154) (Bacteroides vulgatus)).